We begin with the raw amino-acid sequence, 269 residues long: Formamidopyrimidine-DNA glycosylase (269 aa).

The Schiff-base intermediate with DNA role is filled by proline 2. Glutamate 3 (proton donor) is an active-site residue. Lysine 57 acts as the Proton donor; for beta-elimination activity in catalysis. 3 residues coordinate DNA: histidine 90, arginine 109, and lysine 150. The FPG-type zinc-finger motif lies at 235 to 269; it reads QVYGRKGEPCRVCGTPIVATKHAQRATFYCRQCQK. Catalysis depends on arginine 259, which acts as the Proton donor; for delta-elimination activity.

It belongs to the FPG family. Monomer. Zn(2+) is required as a cofactor.

The catalysed reaction is Hydrolysis of DNA containing ring-opened 7-methylguanine residues, releasing 2,6-diamino-4-hydroxy-5-(N-methyl)formamidopyrimidine.. The enzyme catalyses 2'-deoxyribonucleotide-(2'-deoxyribose 5'-phosphate)-2'-deoxyribonucleotide-DNA = a 3'-end 2'-deoxyribonucleotide-(2,3-dehydro-2,3-deoxyribose 5'-phosphate)-DNA + a 5'-end 5'-phospho-2'-deoxyribonucleoside-DNA + H(+). Its function is as follows. Involved in base excision repair of DNA damaged by oxidation or by mutagenic agents. Acts as a DNA glycosylase that recognizes and removes damaged bases. Has a preference for oxidized purines, such as 7,8-dihydro-8-oxoguanine (8-oxoG). Has AP (apurinic/apyrimidinic) lyase activity and introduces nicks in the DNA strand. Cleaves the DNA backbone by beta-delta elimination to generate a single-strand break at the site of the removed base with both 3'- and 5'-phosphates. The protein is Formamidopyrimidine-DNA glycosylase of Escherichia coli O6:H1 (strain CFT073 / ATCC 700928 / UPEC).